The primary structure comprises 230 residues: Large ribosomal subunit protein uL1 (230 aa).

The protein belongs to the universal ribosomal protein uL1 family. As to quaternary structure, part of the 50S ribosomal subunit.

In terms of biological role, binds directly to 23S rRNA. The L1 stalk is quite mobile in the ribosome, and is involved in E site tRNA release. Its function is as follows. Protein L1 is also a translational repressor protein, it controls the translation of the L11 operon by binding to its mRNA. This Paramagnetospirillum magneticum (strain ATCC 700264 / AMB-1) (Magnetospirillum magneticum) protein is Large ribosomal subunit protein uL1.